We begin with the raw amino-acid sequence, 309 residues long: MVGFKATDVPPTATVKFLGAGTAACIADLITFPLDTAKVRLQIQGESQGPVRATASAQYRGVMGTILTMVRTEGPRSLYNGLVAGLQRQMSFASVRIGLYDSVKQFYTKGSEHASIGSRLLAGSTTGALAVAVAQPTDVVKVRFQAQARAGGGRRYQSTVNAYKTIAREEGFRGLWKGTSPNVARNAIVNCAELVTYDLIKDALLKANLMTDDLPCHFTSAFGAGFCTTVIASPVDVVKTRYMNSALGQYSSAGHCALTMLQKEGPRAFYKGFMPSFLRLGSWNVVMFVTYEQLKRALMAACTSREAPF.

Residues Met-1–Lys-16 are Mitochondrial intermembrane-facing. Solcar repeat units lie at residues Pro-11–Phe-106, Ala-114–Ala-203, and Asp-212–Ala-297. The segment at Lys-16–Met-63 is important for interaction with long-chain fatty acids. Residues Phe-17–Arg-40 form a helical membrane-spanning segment. At Leu-41–Ser-77 the chain is on the mitochondrial matrix side. A helical membrane pass occupies residues Leu-78–Val-103. Over Lys-104 to Arg-119 the chain is Mitochondrial intermembrane. Residues Leu-120–Gln-145 form a helical membrane-spanning segment. Residues Ala-146–Arg-173 are Mitochondrial matrix-facing. Residues Gly-174–Leu-199 traverse the membrane as a helical segment. Over Ile-200 to His-217 the chain is Mitochondrial intermembrane. A helical transmembrane segment spans residues Phe-218–Tyr-242. The Mitochondrial matrix portion of the chain corresponds to Met-243 to Ala-268. A helical transmembrane segment spans residues Phe-269–Leu-294. An important for interaction with long-chain fatty acids region spans residues Leu-278–Val-285. Over Lys-295–Phe-309 the chain is Mitochondrial intermembrane.

This sequence belongs to the mitochondrial carrier (TC 2.A.29) family. As to quaternary structure, homotetramer. Adopts an asymmetrical dimer of dimers functional form. As to expression, widely expressed in adult human tissues, including tissues rich in macrophages. Most expressed in white adipose tissue and skeletal muscle.

It localises to the mitochondrion inner membrane. It carries out the reaction L-aspartate(out) + phosphate(in) + H(+)(in) = L-aspartate(in) + phosphate(out) + H(+)(out). The catalysed reaction is oxaloacetate(out) + phosphate(in) + H(+)(in) = oxaloacetate(in) + phosphate(out) + H(+)(out). The enzyme catalyses (S)-malate(out) + phosphate(in) + H(+)(in) = (S)-malate(in) + phosphate(out) + H(+)(out). It catalyses the reaction malonate(out) + phosphate(in) + H(+)(in) = malonate(in) + phosphate(out) + H(+)(out). It carries out the reaction sulfate(out) + phosphate(in) + H(+)(in) = sulfate(in) + phosphate(out) + H(+)(out). The catalysed reaction is (S)-malate(out) = (S)-malate(in). The enzyme catalyses L-aspartate(out) = L-aspartate(in). It catalyses the reaction phosphate(in) = phosphate(out). It carries out the reaction chloride(in) = chloride(out). The catalysed reaction is H(+)(in) = H(+)(out). The enzyme catalyses a long-chain fatty acid(out) = a long-chain fatty acid(in). With respect to regulation, inhibited by pyridoxal- 5'-phosphate, bathophenanthroline, tannic acid, bromocresol purple, butylmalonate and phenylsuccinate. Proton conductance is activated by cardiolipin and long-chain free fatty acids and inhibited by purine nucleotides ATP and ADP. Chloride ion transporter activity is inhibited by long-chain free fatty acids. In terms of biological role, antiporter that exports dicarboxylate intermediates of the Krebs cycle in exchange for phosphate plus a proton across the inner membrane of mitochondria, a process driven by mitochondrial motive force with an overall impact on glycolysis, glutaminolysis and glutathione-dependent redox balance. Continuous export of oxaloacetate and related four-carbon dicarboxylates from mitochondrial matrix into the cytosol negatively regulates the oxidation of acetyl-CoA substrates via the Krebs cycle, lowering the ATP/ADP ratio and reactive oxygen species (ROS) production. May mediate inducible proton entry into the mitochondrial matrix affecting ATP turnover as a protection mechanism against oxidative stress. The proton currents are most likely associated with fatty acid flipping across the inner membrane of mitochondria in a metabolic process regulated by free fatty acids and purine nucleotides. Regulates the use of glucose as a source of energy. Required for glucose-induced DRP1-dependent mitochondrial fission and neuron activation in the ventromedial nucleus of the hypothalamus (VMH). This mitochondrial adaptation mechanism modulates the VMH pool of glucose-excited neurons with an impact on systemic glucose homeostasis. Regulates ROS levels and metabolic reprogramming of macrophages during the resolution phase of inflammation. Attenuates ROS production in response to IL33 to preserve the integrity of the Krebs cycle required for persistent production of itaconate and subsequent GATA3-dependent differentiation of inflammation-resolving alternatively activated macrophages. Can unidirectionally transport anions including L-malate, L-aspartate, phosphate and chloride ions. Does not mediate adaptive thermogenesis. In Homo sapiens (Human), this protein is Dicarboxylate carrier SLC25A8 (UCP2).